The chain runs to 229 residues: NAD(P)H-quinone oxidoreductase subunit K, chloroplastic (229 aa).

The [4Fe-4S] cluster site is built by C43, C44, C108, and C139.

This sequence belongs to the complex I 20 kDa subunit family. In terms of assembly, NDH is composed of at least 16 different subunits, 5 of which are encoded in the nucleus. It depends on [4Fe-4S] cluster as a cofactor.

It localises to the plastid. The protein resides in the chloroplast thylakoid membrane. It catalyses the reaction a plastoquinone + NADH + (n+1) H(+)(in) = a plastoquinol + NAD(+) + n H(+)(out). The enzyme catalyses a plastoquinone + NADPH + (n+1) H(+)(in) = a plastoquinol + NADP(+) + n H(+)(out). NDH shuttles electrons from NAD(P)H:plastoquinone, via FMN and iron-sulfur (Fe-S) centers, to quinones in the photosynthetic chain and possibly in a chloroplast respiratory chain. The immediate electron acceptor for the enzyme in this species is believed to be plastoquinone. Couples the redox reaction to proton translocation, and thus conserves the redox energy in a proton gradient. The protein is NAD(P)H-quinone oxidoreductase subunit K, chloroplastic of Coffea arabica (Arabian coffee).